We begin with the raw amino-acid sequence, 236 residues long: UPF0502 protein Bcenmc03_4618 (236 aa).

It belongs to the UPF0502 family.

The protein is UPF0502 protein Bcenmc03_4618 of Burkholderia orbicola (strain MC0-3).